Consider the following 149-residue polypeptide: Calmodulin-like protein 3 (149 aa).

4 EF-hand domains span residues 8–43, 44–79, 81–116, and 117–149; these read EQIAEFKEAFSLFDKDGDGSITTQELGTVMRSLGQN, PTEAELQGMVNEIDKDGNGTVDFPEFLTMMSRKMKD, DSEEEIREAFRVFDKDGNGFVSAAELRHVMTKLGEK, and LSDEEVDEMIQAADTDGDGQVNYEEFVHMLVSK. The Ca(2+) site is built by aspartate 21, aspartate 23, aspartate 25, serine 27, glutamate 32, aspartate 57, aspartate 59, asparagine 61, threonine 63, glutamate 68, aspartate 94, aspartate 96, asparagine 98, glutamate 105, aspartate 130, aspartate 132, aspartate 134, glutamine 136, and glutamate 141.

Belongs to the calmodulin family. In terms of assembly, interacts with MYO10, the interaction is calcium-dependent and essential for MYO10 function in filopodial extension.

May function as a specific light chain of unconventional myosin-10 (MYO10), also enhances MYO10 translation, possibly by acting as a chaperone for the emerging MYO10 heavy chain protein. May compete with calmodulin by binding, with different affinities, to cellular substrates. In Mus musculus (Mouse), this protein is Calmodulin-like protein 3 (Calml3).